A 514-amino-acid polypeptide reads, in one-letter code: 2-isopropylmalate synthase (514 aa).

Residues 5–267 (LVIFDTTLRD…DTRIHTPEIL (263 aa)) enclose the Pyruvate carboxyltransferase domain. Residues Asp-14, His-202, His-204, and Asn-238 each coordinate Mn(2+). The regulatory domain stretch occupies residues 394 to 514 (RLVALKVGTQ…GSKEHPQAHV (121 aa)).

Belongs to the alpha-IPM synthase/homocitrate synthase family. LeuA type 1 subfamily. Homodimer. Requires Mn(2+) as cofactor.

It is found in the cytoplasm. It carries out the reaction 3-methyl-2-oxobutanoate + acetyl-CoA + H2O = (2S)-2-isopropylmalate + CoA + H(+). It functions in the pathway amino-acid biosynthesis; L-leucine biosynthesis; L-leucine from 3-methyl-2-oxobutanoate: step 1/4. Catalyzes the condensation of the acetyl group of acetyl-CoA with 3-methyl-2-oxobutanoate (2-ketoisovalerate) to form 3-carboxy-3-hydroxy-4-methylpentanoate (2-isopropylmalate). This is 2-isopropylmalate synthase from Hydrogenovibrio crunogenus (strain DSM 25203 / XCL-2) (Thiomicrospira crunogena).